A 405-amino-acid chain; its full sequence is Imidazolonepropionase (405 aa).

The Fe(3+) site is built by His-73 and His-75. Positions 73 and 75 each coordinate Zn(2+). 4-imidazolone-5-propanoate-binding residues include Arg-82, Tyr-145, and His-178. Tyr-145 provides a ligand contact to N-formimidoyl-L-glutamate. His-243 serves as a coordination point for Fe(3+). His-243 contributes to the Zn(2+) binding site. Residue Gln-246 participates in 4-imidazolone-5-propanoate binding. Residue Asp-318 coordinates Fe(3+). Position 318 (Asp-318) interacts with Zn(2+). Positions 320 and 322 each coordinate N-formimidoyl-L-glutamate. Thr-323 is a 4-imidazolone-5-propanoate binding site.

This sequence belongs to the metallo-dependent hydrolases superfamily. HutI family. The cofactor is Zn(2+). Requires Fe(3+) as cofactor.

Its subcellular location is the cytoplasm. It catalyses the reaction 4-imidazolone-5-propanoate + H2O = N-formimidoyl-L-glutamate. The protein operates within amino-acid degradation; L-histidine degradation into L-glutamate; N-formimidoyl-L-glutamate from L-histidine: step 3/3. Its function is as follows. Catalyzes the hydrolytic cleavage of the carbon-nitrogen bond in imidazolone-5-propanoate to yield N-formimidoyl-L-glutamate. It is the third step in the universal histidine degradation pathway. The polypeptide is Imidazolonepropionase (Brucella abortus (strain S19)).